Consider the following 354-residue polypeptide: Guanine nucleotide-binding protein alpha-16 subunit (354 aa).

Glycine 2 is lipidated: N-myristoyl glycine. A lipid anchor (S-palmitoyl cysteine) is attached at cysteine 3. Residues 31–354 enclose the G-alpha domain; it reads KTVKLLLLGA…RDNLRTCGLY (324 aa). The segment at 34 to 47 is G1 motif; the sequence is KLLLLGAGESGKST. Residues 39–46, 174–180, 199–203, 268–271, and alanine 326 contribute to the GTP site; these read GAGESGKS, LRTRIKT, DVGGQ, and NKKD. Mg(2+) is bound by residues serine 46 and threonine 180. The segment at 172–180 is G2 motif; that stretch reads DVLRTRIKT. Residues 195–204 are G3 motif; it reads FVVFDVGGQR. Positions 264–271 are G4 motif; that stretch reads ILFLNKKD. A G5 motif region spans residues 324-329; it reads TCATDT.

Belongs to the G-alpha family. G proteins are composed of 3 units; alpha, beta and gamma. The alpha chain contains the guanine nucleotide binding site.

Guanine nucleotide-binding proteins (G proteins) are involved as modulators or transducers in various transmembrane signaling systems. In the 1-cell embryo, probably together with goa-1, controls nuclear rotation and spindle elongation during mitosis. During the first embryonic cell divisons, plays a role in gpr-1/2 cortical localization and in the proper orientation of EMS blastomere mitotic spindle. The polypeptide is Guanine nucleotide-binding protein alpha-16 subunit (gpa-16) (Caenorhabditis briggsae).